The chain runs to 66 residues: UPF0370 protein YpfN (66 aa).

The helical transmembrane segment at Leu4–Ile24 threads the bilayer. The tract at residues Lys39 to Lys66 is disordered. Residues Leu42–Lys66 are compositionally biased toward basic and acidic residues.

It belongs to the UPF0370 family.

It localises to the cell membrane. This Salmonella paratyphi B (strain ATCC BAA-1250 / SPB7) protein is UPF0370 protein YpfN.